We begin with the raw amino-acid sequence, 177 residues long: ATP synthase subunit b (177 aa).

The chain crosses the membrane as a helical span at residues 16–36; that stretch reads HLLLANMIVTIVVFLLLLILL.

It belongs to the ATPase B chain family. As to quaternary structure, F-type ATPases have 2 components, F(1) - the catalytic core - and F(0) - the membrane proton channel. F(1) has five subunits: alpha(3), beta(3), gamma(1), delta(1), epsilon(1). F(0) has three main subunits: a(1), b(2) and c(10-14). The alpha and beta chains form an alternating ring which encloses part of the gamma chain. F(1) is attached to F(0) by a central stalk formed by the gamma and epsilon chains, while a peripheral stalk is formed by the delta and b chains.

It is found in the cell membrane. Functionally, f(1)F(0) ATP synthase produces ATP from ADP in the presence of a proton or sodium gradient. F-type ATPases consist of two structural domains, F(1) containing the extramembraneous catalytic core and F(0) containing the membrane proton channel, linked together by a central stalk and a peripheral stalk. During catalysis, ATP synthesis in the catalytic domain of F(1) is coupled via a rotary mechanism of the central stalk subunits to proton translocation. Its function is as follows. Component of the F(0) channel, it forms part of the peripheral stalk, linking F(1) to F(0). This is ATP synthase subunit b from Exiguobacterium sibiricum (strain DSM 17290 / CCUG 55495 / CIP 109462 / JCM 13490 / 255-15).